A 173-amino-acid chain; its full sequence is Crossover junction endodeoxyribonuclease RuvC (173 aa).

Catalysis depends on residues D8, E67, and D139. Positions 8, 67, and 139 each coordinate Mg(2+).

Belongs to the RuvC family. As to quaternary structure, homodimer which binds Holliday junction (HJ) DNA. The HJ becomes 2-fold symmetrical on binding to RuvC with unstacked arms; it has a different conformation from HJ DNA in complex with RuvA. In the full resolvosome a probable DNA-RuvA(4)-RuvB(12)-RuvC(2) complex forms which resolves the HJ. It depends on Mg(2+) as a cofactor.

The protein resides in the cytoplasm. It catalyses the reaction Endonucleolytic cleavage at a junction such as a reciprocal single-stranded crossover between two homologous DNA duplexes (Holliday junction).. The RuvA-RuvB-RuvC complex processes Holliday junction (HJ) DNA during genetic recombination and DNA repair. Endonuclease that resolves HJ intermediates. Cleaves cruciform DNA by making single-stranded nicks across the HJ at symmetrical positions within the homologous arms, yielding a 5'-phosphate and a 3'-hydroxyl group; requires a central core of homology in the junction. The consensus cleavage sequence is 5'-(A/T)TT(C/G)-3'. Cleavage occurs on the 3'-side of the TT dinucleotide at the point of strand exchange. HJ branch migration catalyzed by RuvA-RuvB allows RuvC to scan DNA until it finds its consensus sequence, where it cleaves and resolves the cruciform DNA. The protein is Crossover junction endodeoxyribonuclease RuvC of Shigella flexneri serotype 5b (strain 8401).